The chain runs to 183 residues: Negative modulator of initiation of replication (183 aa).

Residues 118–122 are interaction with DNA; sequence RTRIY.

This sequence belongs to the SeqA family. In terms of assembly, homodimer. Polymerizes to form helical filaments.

The protein resides in the cytoplasm. In terms of biological role, negative regulator of replication initiation, which contributes to regulation of DNA replication and ensures that replication initiation occurs exactly once per chromosome per cell cycle. Binds to pairs of hemimethylated GATC sequences in the oriC region, thus preventing assembly of replication proteins and re-initiation at newly replicated origins. Repression is relieved when the region becomes fully methylated. This is Negative modulator of initiation of replication from Proteus mirabilis (strain HI4320).